The chain runs to 272 residues: Orotidine 5'-phosphate decarboxylase (272 aa).

Catalysis depends on Lys-95, which acts as the Proton donor.

This sequence belongs to the OMP decarboxylase family. Type 2 subfamily.

It carries out the reaction orotidine 5'-phosphate + H(+) = UMP + CO2. It functions in the pathway pyrimidine metabolism; UMP biosynthesis via de novo pathway; UMP from orotate: step 2/2. This chain is Orotidine 5'-phosphate decarboxylase, found in Cupriavidus metallidurans (strain ATCC 43123 / DSM 2839 / NBRC 102507 / CH34) (Ralstonia metallidurans).